We begin with the raw amino-acid sequence, 354 residues long: Guanine nucleotide-binding protein G(o) subunit alpha (354 aa).

Glycine 2 carries the N-myristoyl glycine lipid modification. The S-palmitoyl cysteine moiety is linked to residue cysteine 3. Residues 32–354 form the G-alpha domain; it reads KDVKLLLLGA…AYNLRGCGLY (323 aa). The segment at 35–48 is G1 motif; the sequence is KLLLLGAGESGKST. Residues glutamate 43, lysine 46, serine 47, threonine 48, serine 152, leucine 176, arginine 177, threonine 178, and arginine 179 each coordinate GTP. Serine 47 lines the Mg(2+) pocket. The tract at residues 174-182 is G2 motif; sequence DILRTRVKT. Threonine 182 serves as a coordination point for Mg(2+). The tract at residues 197-206 is G3 motif; that stretch reads FRLFDVGGQR. The interval 266–273 is G4 motif; sequence ILFLNKKD. The GTP site is built by asparagine 270, aspartate 273, and cysteine 325. Positions 324 to 329 are G5 motif; sequence TCATDT.

The protein belongs to the G-alpha family. G(i/o/t/z) subfamily. In terms of assembly, g proteins are composed of 3 units; alpha, beta and gamma.

The enzyme catalyses GTP + H2O = GDP + phosphate + H(+). Guanine nucleotide-binding proteins (G proteins) function as transducers downstream of G protein-coupled receptors (GPCRs) in numerous signaling cascades. The alpha chain contains the guanine nucleotide binding site and alternates between an active, GTP-bound state and an inactive, GDP-bound state. Signaling by an activated GPCR promotes GDP release and GTP binding. The alpha subunit has a low GTPase activity that converts bound GTP to GDP, thereby terminating the signal. Both GDP release and GTP hydrolysis are modulated by numerous regulatory proteins. Signaling is mediated via effector proteins, such as adenylate cyclase. Inhibits adenylate cyclase activity, leading to decreased intracellular cAMP levels. This is Guanine nucleotide-binding protein G(o) subunit alpha (gna0) from Xenopus laevis (African clawed frog).